The sequence spans 406 residues: Indole-3-pyruvate monooxygenase YUCCA1 (406 aa).

FAD is bound at residue 21–26; that stretch reads GAGPSG. 184-189 provides a ligand contact to NADP(+); it reads GCGNSG.

This sequence belongs to the FMO family. FAD is required as a cofactor. Expressed in coleoptile tips, root tips, leaf blade tips, shoot apical meristem, vasculature of stems and flowers.

The enzyme catalyses indole-3-pyruvate + NADPH + O2 + H(+) = (indol-3-yl)acetate + CO2 + NADP(+) + H2O. Involved in auxin biosynthesis. Converts the indole-3-pyruvic acid (IPA) produced by the TAA family to indole-3-acetic acid (IAA). Functions downstream of TAR2 in auxin biosynthesis. Functions upstream of WOX11, a transcription factor that promotes the development of crown roots. In Oryza sativa subsp. japonica (Rice), this protein is Indole-3-pyruvate monooxygenase YUCCA1.